Reading from the N-terminus, the 151-residue chain is MTMAKLFDKVIGIMGFADDDYEDDYFEEEEEKEEVREETRGTGNRKGAQVVSIHTQKQIKVVVMEPQAFEDSQSIADQLRNRRPVIVNLENAERNLAKRIVDFVSGATYALGGNMQKVGNGIFLFVPNNVDISGEMKDDFKEKGFFWSLTK.

This sequence belongs to the SepF family. Homodimer. Interacts with FtsZ.

The protein resides in the cytoplasm. Cell division protein that is part of the divisome complex and is recruited early to the Z-ring. Probably stimulates Z-ring formation, perhaps through the cross-linking of FtsZ protofilaments. Its function overlaps with FtsA. In Desulfitobacterium hafniense (strain Y51), this protein is Cell division protein SepF.